A 457-amino-acid chain; its full sequence is Serine--tRNA ligase (457 aa).

An L-serine-binding site is contributed by 252–254; the sequence is TAE. ATP-binding positions include 283–285 and Val299; that span reads RKE. L-serine is bound at residue Glu306. 370–373 is an ATP binding site; that stretch reads EMVS. Residue Thr406 participates in L-serine binding.

This sequence belongs to the class-II aminoacyl-tRNA synthetase family. Type-1 seryl-tRNA synthetase subfamily. Homodimer. The tRNA molecule binds across the dimer.

It is found in the cytoplasm. It catalyses the reaction tRNA(Ser) + L-serine + ATP = L-seryl-tRNA(Ser) + AMP + diphosphate + H(+). The catalysed reaction is tRNA(Sec) + L-serine + ATP = L-seryl-tRNA(Sec) + AMP + diphosphate + H(+). It participates in aminoacyl-tRNA biosynthesis; selenocysteinyl-tRNA(Sec) biosynthesis; L-seryl-tRNA(Sec) from L-serine and tRNA(Sec): step 1/1. Functionally, catalyzes the attachment of serine to tRNA(Ser). Is also able to aminoacylate tRNA(Sec) with serine, to form the misacylated tRNA L-seryl-tRNA(Sec), which will be further converted into selenocysteinyl-tRNA(Sec). In Saccharolobus islandicus (strain Y.G.57.14 / Yellowstone #1) (Sulfolobus islandicus), this protein is Serine--tRNA ligase.